The chain runs to 113 residues: DNA-binding protein PTO0204 (113 aa).

Belongs to the PDCD5 family.

This is DNA-binding protein PTO0204 from Picrophilus torridus (strain ATCC 700027 / DSM 9790 / JCM 10055 / NBRC 100828 / KAW 2/3).